A 309-amino-acid polypeptide reads, in one-letter code: L-2-keto-3-deoxyarabonate dehydratase (309 aa).

K171 functions as the Schiff-base intermediate with substrate in the catalytic mechanism.

The protein belongs to the DapA family. In terms of assembly, homodimer.

It catalyses the reaction 2-dehydro-3-deoxy-L-arabinonate = 2,5-dioxopentanoate + H2O. Functionally, catalyzes the dehydration of L-2-keto-3-deoxyarabonate (L-KDA) to alpha-ketoglutaric semialdehyde (alphaKGSA). Is involved in a degradation pathway of L-arabinose that allows A.brasilense to grow on L-arabinose as a sole carbon source. This Azospirillum brasilense protein is L-2-keto-3-deoxyarabonate dehydratase (araD).